Consider the following 149-residue polypeptide: uncharacterized protein (149 aa).

One can recognise an N-acetyltransferase domain in the interval 2–146; sequence LEVKTISVED…NHIVMYKTLR (145 aa).

Belongs to the acetyltransferase family.

This is an uncharacterized protein from Bacillus subtilis (strain 168).